The following is a 457-amino-acid chain: Argininosuccinate lyase (457 aa).

Belongs to the lyase 1 family. Argininosuccinate lyase subfamily.

Its subcellular location is the cytoplasm. It carries out the reaction 2-(N(omega)-L-arginino)succinate = fumarate + L-arginine. It functions in the pathway amino-acid biosynthesis; L-arginine biosynthesis; L-arginine from L-ornithine and carbamoyl phosphate: step 3/3. The polypeptide is Argininosuccinate lyase (Escherichia coli O1:K1 / APEC).